The sequence spans 231 residues: Large ribosomal subunit protein uL1 (231 aa).

The protein belongs to the universal ribosomal protein uL1 family. As to quaternary structure, part of the 50S ribosomal subunit.

Binds directly to 23S rRNA. The L1 stalk is quite mobile in the ribosome, and is involved in E site tRNA release. In terms of biological role, protein L1 is also a translational repressor protein, it controls the translation of the L11 operon by binding to its mRNA. This is Large ribosomal subunit protein uL1 from Neisseria gonorrhoeae (strain ATCC 700825 / FA 1090).